We begin with the raw amino-acid sequence, 271 residues long: Urease accessory protein UreD (271 aa).

It belongs to the UreD family. As to quaternary structure, ureD, UreF and UreG form a complex that acts as a GTP-hydrolysis-dependent molecular chaperone, activating the urease apoprotein by helping to assemble the nickel containing metallocenter of UreC. The UreE protein probably delivers the nickel.

The protein localises to the cytoplasm. Required for maturation of urease via the functional incorporation of the urease nickel metallocenter. The protein is Urease accessory protein UreD of Haemophilus influenzae (strain PittEE).